Here is a 346-residue protein sequence, read N- to C-terminus: Histidinol-phosphate aminotransferase (346 aa).

K206 is subject to N6-(pyridoxal phosphate)lysine.

Belongs to the class-II pyridoxal-phosphate-dependent aminotransferase family. Histidinol-phosphate aminotransferase subfamily. As to quaternary structure, homodimer. The cofactor is pyridoxal 5'-phosphate.

It catalyses the reaction L-histidinol phosphate + 2-oxoglutarate = 3-(imidazol-4-yl)-2-oxopropyl phosphate + L-glutamate. It participates in amino-acid biosynthesis; L-histidine biosynthesis; L-histidine from 5-phospho-alpha-D-ribose 1-diphosphate: step 7/9. This chain is Histidinol-phosphate aminotransferase, found in Bacteroides thetaiotaomicron (strain ATCC 29148 / DSM 2079 / JCM 5827 / CCUG 10774 / NCTC 10582 / VPI-5482 / E50).